We begin with the raw amino-acid sequence, 480 residues long: Uridine 5'-monophosphate synthase (480 aa).

The residue at position 2 (alanine 2) is an N-acetylalanine. Positions 2–214 are OPRTase; it reads AVARAALGPL…VFVAANHNGS (213 aa). Phosphotyrosine is present on tyrosine 37. Serine 214 is subject to Phosphoserine. The domain linker stretch occupies residues 215 to 220; it reads PLSIKE. The segment at 221-480 is OMPdecase; that stretch reads APKELSFGAR…WEAYLSRLGV (260 aa). Serine 257 contacts orotidine 5'-phosphate. UMP-binding positions include serine 257, aspartate 259, and 281 to 283; that span reads KTH. Position 281 (lysine 281) interacts with orotidine 5'-phosphate. Residues aspartate 312, lysine 314, and aspartate 317 each act as for OMPdecase activity in the active site. Orotidine 5'-phosphate contacts are provided by residues lysine 314, aspartate 317, threonine 321, serine 372, 430 to 432, and 450 to 451; these read QQY and GR. Residues aspartate 317, threonine 321, serine 372, 430 to 432, and 450 to 451 each bind UMP; these read QQY and GR.

This sequence in the N-terminal section; belongs to the purine/pyrimidine phosphoribosyltransferase family. It in the C-terminal section; belongs to the OMP decarboxylase family. In terms of assembly, homodimer; dimerization is required for enzymatic activity.

The enzyme catalyses orotidine 5'-phosphate + diphosphate = orotate + 5-phospho-alpha-D-ribose 1-diphosphate. The catalysed reaction is orotidine 5'-phosphate + H(+) = UMP + CO2. The protein operates within pyrimidine metabolism; UMP biosynthesis via de novo pathway; UMP from orotate: step 1/2. Its pathway is pyrimidine metabolism; UMP biosynthesis via de novo pathway; UMP from orotate: step 2/2. Its function is as follows. Bifunctional enzyme catalyzing the last two steps of de novo pyrimidine biosynthesis, orotate phosphoribosyltransferase (OPRT), which converts orotate to orotidine-5'-monophosphate (OMP), and orotidine-5'-monophosphate decarboxylase (ODC), the terminal enzymatic reaction that decarboxylates OMP to uridine monophosphate (UMP). This is Uridine 5'-monophosphate synthase from Homo sapiens (Human).